Consider the following 232-residue polypeptide: Large ribosomal subunit protein uL1 (232 aa).

It belongs to the universal ribosomal protein uL1 family. As to quaternary structure, part of the 50S ribosomal subunit.

Binds directly to 23S rRNA. The L1 stalk is quite mobile in the ribosome, and is involved in E site tRNA release. Its function is as follows. Protein L1 is also a translational repressor protein, it controls the translation of the L11 operon by binding to its mRNA. The sequence is that of Large ribosomal subunit protein uL1 from Xanthomonas oryzae pv. oryzae (strain MAFF 311018).